A 165-amino-acid polypeptide reads, in one-letter code: MFDVSFTELIVIGVVALIVLGPERLPKVARTVGHLLGRAQRYVHDVKSDIQREIELDELRKFKQQIDSTAQDVNQSLRSATDSLRASGDSLRAELDDTARTVNEAAADIQRTIAPHPAITAETDTSKLPGTPATLPATAAAEPTPAAPAASQAEAPKSPSTGNAT.

Residues 1 to 21 (MFDVSFTELIVIGVVALIVLG) form a helical membrane-spanning segment. Polar residues predominate over residues 67 to 84 (DSTAQDVNQSLRSATDSL). A disordered region spans residues 67 to 165 (DSTAQDVNQS…PKSPSTGNAT (99 aa)). The segment covering 127–159 (KLPGTPATLPATAAAEPTPAAPAASQAEAPKSP) has biased composition (low complexity).

This sequence belongs to the TatB family. As to quaternary structure, the Tat system comprises two distinct complexes: a TatABC complex, containing multiple copies of TatA, TatB and TatC subunits, and a separate TatA complex, containing only TatA subunits. Substrates initially bind to the TatABC complex, which probably triggers association of the separate TatA complex to form the active translocon.

It is found in the cell inner membrane. Functionally, part of the twin-arginine translocation (Tat) system that transports large folded proteins containing a characteristic twin-arginine motif in their signal peptide across membranes. Together with TatC, TatB is part of a receptor directly interacting with Tat signal peptides. TatB may form an oligomeric binding site that transiently accommodates folded Tat precursor proteins before their translocation. The chain is Sec-independent protein translocase protein TatB from Bordetella avium (strain 197N).